We begin with the raw amino-acid sequence, 249 residues long: U2 small nuclear ribonucleoprotein A' (249 aa).

LRR repeat units follow at residues 20–41, 43–64, 65–87, and 89–110; these read KERELDLRGNKIPVIENLGATE, QFDTIDLSDNEIVKLENFPYLN, RLGTLLINNNRITRINPNLGEFL, and KLHSLVLTNNRLVNLVEIDPLA. In terms of domain architecture, LRRCT spans 123-161; sequence NNITKKANYRLYVIHKLKSLRVLDFIKIKAKERAEAASL.

This sequence belongs to the U2 small nuclear ribonucleoprotein A family.

Its subcellular location is the nucleus. The protein resides in the nucleus speckle. Functionally, this protein is associated with sn-RNP U2. It helps the A' protein to bind stem loop IV of U2 snRNA. The sequence is that of U2 small nuclear ribonucleoprotein A' from Arabidopsis thaliana (Mouse-ear cress).